The chain runs to 347 residues: Peptidoglycan recognition protein 3 (347 aa).

An N-terminal signal peptide occupies residues 1–26; that stretch reads MLVSWDHPKMLPRLLGFLALSLLACG. N-acetylmuramoyl-L-alanine amidase domains are found at residues 77 to 185 and 206 to 328; these read LQSQ…KACP and PAKF…VSNI. An N-linked (GlcNAc...) asparagine glycan is attached at N120. 3 disulfides stabilise this stretch: C184–C306, C200–C244, and C220–C226. The peptidoglycan site is built by H237 and Y248. The interval 270 to 275 is interaction with murein; sequence HTYGYN.

The protein belongs to the N-acetylmuramoyl-L-alanine amidase 2 family. In terms of assembly, monomer. Homodimer; disulfide-linked. Heterodimer with PGLYRP4; disulfide-linked. As to expression, detected in lung, spleen and stomach, and at low levels in eye, heart, thymus and testis.

It localises to the secreted. In terms of biological role, pattern receptor that binds to murein peptidoglycans (PGN) of Gram-positive bacteria. Has bactericidal activity towards Gram-positive bacteria. May kill Gram-positive bacteria by interfering with peptidoglycan biosynthesis. Also binds to Gram-negative bacteria, and has bacteriostatic activity towards Gram-negative bacteria. Plays a role in innate immunity. This Mus musculus (Mouse) protein is Peptidoglycan recognition protein 3 (Pglyrp3).